Reading from the N-terminus, the 194-residue chain is Peptidyl-tRNA hydrolase (194 aa).

Tyrosine 17 is a binding site for tRNA. The Proton acceptor role is filled by histidine 22. Positions 68, 70, and 116 each coordinate tRNA.

It belongs to the PTH family. As to quaternary structure, monomer.

It is found in the cytoplasm. It catalyses the reaction an N-acyl-L-alpha-aminoacyl-tRNA + H2O = an N-acyl-L-amino acid + a tRNA + H(+). Hydrolyzes ribosome-free peptidyl-tRNAs (with 1 or more amino acids incorporated), which drop off the ribosome during protein synthesis, or as a result of ribosome stalling. In terms of biological role, catalyzes the release of premature peptidyl moieties from peptidyl-tRNA molecules trapped in stalled 50S ribosomal subunits, and thus maintains levels of free tRNAs and 50S ribosomes. This is Peptidyl-tRNA hydrolase from Pseudomonas aeruginosa (strain LESB58).